A 439-amino-acid polypeptide reads, in one-letter code: Xylose isomerase (439 aa).

Catalysis depends on residues H99 and D102. E230, E266, H269, D294, D305, D307, and D337 together coordinate Mg(2+).

This sequence belongs to the xylose isomerase family. As to quaternary structure, homotetramer. The cofactor is Mg(2+).

The protein localises to the cytoplasm. The enzyme catalyses alpha-D-xylose = alpha-D-xylulofuranose. The protein is Xylose isomerase of Oceanobacillus iheyensis (strain DSM 14371 / CIP 107618 / JCM 11309 / KCTC 3954 / HTE831).